The chain runs to 577 residues: Guanine nucleotide-binding protein-like 3-like protein (577 aa).

Basic residues predominate over residues 1–30; the sequence is MMKIRHKNKKPGKGSKGCKKPARQNGKKVT. The interval 1–75 is disordered; the sequence is MMKIRHKNKK…VAREQERQRH (75 aa). The interval 9 to 28 is required for nucleolar localization; the sequence is KKPGKGSKGCKKPARQNGKK. Residues 42–75 show a composition bias toward basic and acidic residues; sequence GNDHASREAELKKKRVEEMREKQQVAREQERQRH. Residues 43-103 adopt a coiled-coil conformation; sequence NDHASREAEL…QKEEVLQELN (61 aa). The CP-type G domain occupies 118–304; sequence YKEFRKVVEY…LLDAPGIVPG (187 aa). Residues 166-169, 253-260, and 297-300 each bind GTP; these read NKID, GLPNVGKS, and DAPG.

The protein belongs to the TRAFAC class YlqF/YawG GTPase family. As to quaternary structure, interacts with MDM2; this interaction, which occurs in the nucleoplasm, stabilizes MDM2. Indirectly interacts with TP53, via MDM2-binding. Interacts with TERF1; this interaction probably occurs in the nucleoplasm and is increased during mitosis, when the nucleolus is disassembled. This binding may promote TERF1 homodimerization. Interacts with TERT.

Its subcellular location is the nucleus. It localises to the nucleolus. In terms of biological role, stabilizes TERF1 telomeric association by preventing TERF1 recruitment by PML. Stabilizes TERF1 protein by preventing its ubiquitination and hence proteasomal degradation. Does so by interfering with TERF1-binding to FBXO4 E3 ubiquitin-protein ligase. Required for cell proliferation. By stabilizing TRF1 protein during mitosis, promotes metaphase-to-anaphase transition. Stabilizes MDM2 protein by preventing its ubiquitination, and hence proteasomal degradation. By acting on MDM2, may affect TP53 activity. Required for normal processing of ribosomal pre-rRNA. Binds GTP. In Mus musculus (Mouse), this protein is Guanine nucleotide-binding protein-like 3-like protein (Gnl3l).